The sequence spans 684 residues: ATP-dependent DNA helicase RecG (684 aa).

The segment at 51–148 (RHIASMATLQ…ADVPQFQAPH (98 aa)) is wedge domain. The region spanning 278 to 439 (DLARHRPMRR…VHADLEVSVI (162 aa)) is the Helicase ATP-binding domain. 291–298 (GDVGSGKT) contributes to the ATP binding site. Residues 392-395 (DEQH) carry the DEAH box motif.

Belongs to the helicase family. RecG subfamily. Monomer.

It catalyses the reaction Couples ATP hydrolysis with the unwinding of duplex DNA by translocating in the 3'-5' direction.. The enzyme catalyses ATP + H2O = ADP + phosphate + H(+). In terms of biological role, plays a critical role in recombination and DNA repair. Helps process Holliday junction intermediates to mature products by catalyzing branch migration. Has replication fork regression activity, unwinds stalled or blocked replication forks to make a HJ that can be resolved. Has a DNA unwinding activity characteristic of a DNA helicase with 3'-5' polarity. The protein is ATP-dependent DNA helicase RecG of Acidithiobacillus ferridurans.